Reading from the N-terminus, the 319-residue chain is ATP-dependent 6-phosphofructokinase (319 aa).

Position 11 (glycine 11) interacts with ATP. 21 to 25 (RAVVR) contacts ADP. Residues 72-73 (RC) and 102-105 (GDGS) contribute to the ATP site. Aspartate 103 provides a ligand contact to Mg(2+). Substrate is bound at residue 125–127 (TID). Aspartate 127 functions as the Proton acceptor in the catalytic mechanism. ADP is bound at residue arginine 154. Residues arginine 162 and 169–171 (MGR) contribute to the substrate site. ADP-binding positions include 185–187 (GAE), arginine 211, and 213–215 (KKH). Substrate-binding positions include glutamate 222, arginine 243, and 249 to 252 (HIQR).

This sequence belongs to the phosphofructokinase type A (PFKA) family. ATP-dependent PFK group I subfamily. Prokaryotic clade 'B1' sub-subfamily. In terms of assembly, homotetramer. Requires Mg(2+) as cofactor.

The protein localises to the cytoplasm. It catalyses the reaction beta-D-fructose 6-phosphate + ATP = beta-D-fructose 1,6-bisphosphate + ADP + H(+). It functions in the pathway carbohydrate degradation; glycolysis; D-glyceraldehyde 3-phosphate and glycerone phosphate from D-glucose: step 3/4. Its activity is regulated as follows. Allosterically activated by ADP and other diphosphonucleosides, and allosterically inhibited by phosphoenolpyruvate. Functionally, catalyzes the phosphorylation of D-fructose 6-phosphate to fructose 1,6-bisphosphate by ATP, the first committing step of glycolysis. This chain is ATP-dependent 6-phosphofructokinase, found in Bacillus pumilus (strain SAFR-032).